The following is a 280-amino-acid chain: 1-cyclohexenylcarbonyl-CoA reductase (280 aa).

Residues 22–25 (SRGI), 71–72 (DV), and Asn-98 each bind NADP(+). Residues Tyr-158 and Lys-165 each act as proton acceptor in the active site. Residues Lys-165 and 194–196 (IDS) each bind NADP(+).

This sequence belongs to the short-chain dehydrogenases/reductases (SDR) family. Homodimer.

It carries out the reaction (4R,5R)-4,5-dihydroxycyclohex-2-ene-1-carbonyl-CoA + NADP(+) = (3R,4R)-3,4-dihydroxycyclohexa-1,5-diene-1-carbonyl-CoA + NADPH + H(+). It catalyses the reaction (3S)-3-hydroxycyclohexane-1-carbonyl-CoA + NADP(+) = (5S)-5-hydroxycyclohex-1-ene-1-carbonyl-CoA + NADPH + H(+). The enzyme catalyses cyclohexane-1-carbonyl-CoA + NADP(+) = cyclohex-1-ene-1-carbonyl-CoA + NADPH + H(+). Its pathway is antibiotic biosynthesis. Inhibited by the thiol inhibitors p-chloromercuribenzoate, N-ethylmaleimide and iodoacetamide. Also inhibited by various divalent cations. Its function is as follows. Involved in the biosynthesis of the antifungal antibiotic ansatrienin A (mycotrienin I). Catalyzes three of the reductive steps involved in the formation of the cyclohexanecarboxylic acid (CHC) moiety of ansatrienin from shikimic acid. Can use 3,4-dihydroxycyclohexa-1,5-diene-1-carbonyl-CoA, 5-hydroxycyclohex-1-ene-1-carbonyl-CoA and cyclohex-1-ene-1-carbonyl-CoA as substrates. The polypeptide is 1-cyclohexenylcarbonyl-CoA reductase (Streptomyces collinus).